The chain runs to 358 residues: Isopentenyl-diphosphate delta-isomerase (358 aa).

Residue 12 to 13 (RK) participates in substrate binding. FMN-binding positions include 69–71 (AMT), Ser-99, and Asn-128. Residue Gln-158 participates in substrate binding. Glu-159 lines the Mg(2+) pocket. FMN is bound by residues Lys-190, Thr-220, 267–269 (GIR), and 288–289 (AG).

This sequence belongs to the IPP isomerase type 2 family. As to quaternary structure, homooctamer. Dimer of tetramers. FMN is required as a cofactor. NADPH serves as cofactor. The cofactor is Mg(2+).

The protein resides in the cytoplasm. It carries out the reaction isopentenyl diphosphate = dimethylallyl diphosphate. Functionally, involved in the biosynthesis of isoprenoids. Catalyzes the 1,3-allylic rearrangement of the homoallylic substrate isopentenyl (IPP) to its allylic isomer, dimethylallyl diphosphate (DMAPP). The protein is Isopentenyl-diphosphate delta-isomerase of Listeria monocytogenes serotype 4b (strain CLIP80459).